We begin with the raw amino-acid sequence, 56 residues long: Protein hunchback (56 aa).

C2H2-type zinc fingers lie at residues 1–5 (HLRNH), 11–33 (FRCD…LKSH), and 39–56 (YRCA…SLKL).

This sequence belongs to the hunchback C2H2-type zinc-finger protein family.

Its subcellular location is the nucleus. Gap class segmentation protein that controls development of head structures. This is Protein hunchback (hb) from Locusta migratoria (Migratory locust).